A 170-amino-acid polypeptide reads, in one-letter code: Large ribosomal subunit protein uL11 (170 aa).

Belongs to the universal ribosomal protein uL11 family. In terms of assembly, part of the ribosomal stalk of the 50S ribosomal subunit. Interacts with L10 and the large rRNA to form the base of the stalk. L10 forms an elongated spine to which L12 dimers bind in a sequential fashion forming a multimeric L10(L12)X complex.

In terms of biological role, forms part of the ribosomal stalk which helps the ribosome interact with GTP-bound translation factors. The protein is Large ribosomal subunit protein uL11 of Saccharolobus solfataricus (strain ATCC 35092 / DSM 1617 / JCM 11322 / P2) (Sulfolobus solfataricus).